Here is a 213-residue protein sequence, read N- to C-terminus: Glycerol-3-phosphate acyltransferase (213 aa).

5 helical membrane-spanning segments follow: residues 3-23 (LLLF…LWIG), 68-88 (ILLP…GFFA), 112-132 (VLLG…VLVL), 134-154 (LFSM…LSVL), and 163-183 (LPNY…IIII).

This sequence belongs to the PlsY family. Probably interacts with PlsX.

Its subcellular location is the cell membrane. The enzyme catalyses an acyl phosphate + sn-glycerol 3-phosphate = a 1-acyl-sn-glycero-3-phosphate + phosphate. It participates in lipid metabolism; phospholipid metabolism. In terms of biological role, catalyzes the transfer of an acyl group from acyl-phosphate (acyl-PO(4)) to glycerol-3-phosphate (G3P) to form lysophosphatidic acid (LPA). This enzyme utilizes acyl-phosphate as fatty acyl donor, but not acyl-CoA or acyl-ACP. The chain is Glycerol-3-phosphate acyltransferase from Streptococcus pyogenes serotype M28 (strain MGAS6180).